The following is a 212-amino-acid chain: External core antigen (212 aa).

The first 19 residues, 1 to 19, serve as a signal peptide directing secretion; it reads MQLFHLCLIISCSCPTVQA. The segment at 25–27 is HBEAG; the sequence is GWL. The segment at 165–212 is disordered; sequence NAPILSTLPETTVVRRRGRSPRRRTPSPRRRRSQSPRRRRSQSRESQC. Residues 178-205 show a composition bias toward basic residues; that stretch reads VRRRGRSPRRRTPSPRRRRSQSPRRRRS. The 1; half-length repeat unit spans residues 184-190; it reads SPRRRTP. The tract at residues 184–206 is 3 X 8 AA repeats of S-P-R-R-R-R-S-Q; the sequence is SPRRRTPSPRRRRSQSPRRRRSQ. The propeptide occupies 184 to 212; the sequence is SPRRRTPSPRRRRSQSPRRRRSQSRESQC. Tandem repeats lie at residues 191 to 198 and 199 to 206.

The protein belongs to the orthohepadnavirus precore antigen family. In terms of assembly, homodimerizes. Post-translationally, phosphorylated. Cleaved by host furin.

The protein localises to the secreted. It localises to the host nucleus. Its function is as follows. May regulate immune response to the intracellular capsid in acting as a T-cell tolerogen, by having an immunoregulatory effect which prevents destruction of infected cells by cytotoxic T-cells. This immune regulation may predispose to chronicity during perinatal infections and prevent severe liver injury during adult infections. The sequence is that of External core antigen from Hepatitis B virus genotype B2 (isolate Indonesia/pIDW420/1988) (HBV-B).